The chain runs to 207 residues: Small ribosomal subunit protein uS3c (207 aa).

A KH type-2 domain is found at 39–109 (IRDYIFTNLL…QLKINIIDVT (71 aa)).

The protein belongs to the universal ribosomal protein uS3 family. As to quaternary structure, part of the 30S ribosomal subunit.

The protein resides in the plastid. It localises to the chloroplast. This chain is Small ribosomal subunit protein uS3c (rps3), found in Cyanidium caldarium (Red alga).